The following is a 1132-amino-acid chain: MGMACLTMTEMEGTSTSSIYQNGDISGNANSMKQIDPVLQVYLYHSLGKSEADYLTFPSGEYVAEEICIAASKACGITPVYHNMFALMSETERIWYPPNHVFHIDESTRHNVLYRIRFYFPRWYCSGSNRAYRHGISRGAEAPLLDDFVMSYLFAQWRHDFVHGWIKVPVTHETQEECLGMAVLDMMRIAKENDQTPLAIYNSISYKTFLPKCIRAKIQDYHILTRKRIRYRFRRFIQQFSQCKATARNLKLKYLINLETLQSAFYTEKFEVKEPGSGPSGEEIFATIIITGNGGIQWSRGKHKESETLTEQDLQLYCDFPNIIDVSIKQANQEGSNESRVVTIHKQDGKNLEIELSSLREALSFVSLIDGYYRLTADAHHYLCKEVAPPAVLENIQSNCHGPISMDFAISKLKKAGNQTGLYVLRCSPKDFNKYFLTFAVERENVIEYKHCLITKNENEEYNLSGTKKNFSSLKDLLNCYQMETVRSDNIIFQFTKCCPPKPKDKSNLLVFRTNGVSDVPTSPTLQRPTHMNQMVFHKIRNEDLIFNESLGQGTFTKIFKGVRREVGDYGQLHETEVLLKVLDKAHRNYSESFFEAASMMSKLSHKHLVLNYGVCVCGDENILVQEFVKFGSLDTYLKKNKNCINILWKLEVAKQLAWAMHFLEENTLIHGNVCAKNILLIREEDRKTGNPPFIKLSDPGISITVLPKDILQERIPWVPPECIENPKNLNLATDKWSFGTTLWEICSGGDKPLSALDSQRKLQFYEDRHQLPAPKWAELANLINNCMDYEPDFRPSFRAIIRDLNSLFTPDYELLTENDMLPNMRIGALGFSGAFEDRDPTQFEERHLKFLQQLGKGNFGSVEMCRYDPLQDNTGEVVAVKKLQHSTEEHLRDFEREIEILKSLQHDNIVKYKGVCYSAGRRNLKLIMEYLPYGSLRDYLQKHKERIDHIKLLQYTSQICKGMEYLGTKRYIHRDLATRNILVENENRVKIGDFGLTKVLPQDKEYYKVKEPGESPIFWYAPESLTESKFSVASDVWSFGVVLYELFTYIEKSKSPPAEFMRMIGNDKQGQMIVFHLIELLKNNGRLPRPDGCPDEIYMIMTECWNNNVNQRPSFRDLALRVDQIRDNMAG.

Residues 1 to 239 (MGMACLTMTE…RYRFRRFIQQ (239 aa)) are interaction with cytokine/interferon/growth hormone receptors. The FERM domain occupies 37–380 (PVLQVYLYHS…GYYRLTADAH (344 aa)). Position 119 is a phosphotyrosine; by autocatalysis (Y119). Residues Y372 and Y373 each carry the phosphotyrosine modification. Positions 401–482 (HGPISMDFAI…SLKDLLNCYQ (82 aa)) constitute an SH2; atypical domain. A Phosphoserine modification is found at S523. A Protein kinase 1 domain is found at 545 to 809 (LIFNESLGQG…AIIRDLNSLF (265 aa)). Phosphotyrosine occurs at positions 570 and 813. Positions 849–1124 (LKFLQQLGKG…SFRDLALRVD (276 aa)) constitute a Protein kinase 2 domain. 855 to 863 (LGKGNFGSV) provides a ligand contact to ATP. Y868 is modified (phosphotyrosine; by autocatalysis). K882 is a binding site for ATP. Y966 and Y972 each carry phosphotyrosine; by autocatalysis. Catalysis depends on D976, which acts as the Proton acceptor. 2 positions are modified to phosphotyrosine; by autocatalysis: Y1007 and Y1008.

Belongs to the protein kinase superfamily. Tyr protein kinase family. JAK subfamily. Interacts with EPOR, LYN, SIRPA, SH2B1 and TEC. Interacts with IL23R. Interacts with SKB1. Interacts with STAM2. Interacts with IFNGR2 (via intracellular domain). Interacts with LEPR (Isoform B). Interacts with HSP90AB1; promotes functional activation in a heat shock-dependent manner. Interacts with STRA6. Interacts with RHEX; this interaction occurs in a erythropoietin (EPO)-dependent manner. Interacts with ASB2; the interaction targets JAK2 for Notch-induced proteasomal degradation. Interacts with MPL/TPOR. Requires Mg(2+) as cofactor. Autophosphorylated, leading to regulate its activity. Leptin promotes phosphorylation on tyrosine residues, including phosphorylation on Tyr-813. Autophosphorylation on Tyr-119 in response to EPO down-regulates its kinase activity. Autophosphorylation on Tyr-868, Tyr-966 and Tyr-972 in response to growth hormone (GH) are required for maximal kinase activity. Also phosphorylated by TEC. Phosphorylated on tyrosine residues in response to interferon gamma signaling. Phosphorylated on tyrosine residues in response to a signaling cascade that is activated by increased cellular retinol. Post-translationally, undergoes Notch-induced ubiquitination and subsequent proteasomal degradation which is mediated by ASB1 or ASB2, the substrate-recognition components of probable ECS E3 ubiquitin-protein ligase complexes. Ubiquitously expressed throughout most tissues.

The protein localises to the endomembrane system. The protein resides in the cytoplasm. It localises to the nucleus. It catalyses the reaction L-tyrosyl-[protein] + ATP = O-phospho-L-tyrosyl-[protein] + ADP + H(+). With respect to regulation, regulated by autophosphorylation, can both activate or decrease activity. Heme regulates its activity by enhancing the phosphorylation on Tyr-1007 and Tyr-1008. Its function is as follows. Non-receptor tyrosine kinase involved in various processes such as cell growth, development, differentiation or histone modifications. Mediates essential signaling events in both innate and adaptive immunity. In the cytoplasm, plays a pivotal role in signal transduction via its association with type I receptors such as growth hormone (GHR), prolactin (PRLR), leptin (LEPR), erythropoietin (EPOR), thrombopoietin receptor (MPL/TPOR); or type II receptors including IFN-alpha, IFN-beta, IFN-gamma and multiple interleukins. Following ligand-binding to cell surface receptors, phosphorylates specific tyrosine residues on the cytoplasmic tails of the receptor, creating docking sites for STATs proteins. Subsequently, phosphorylates the STATs proteins once they are recruited to the receptor. Phosphorylated STATs then form homodimer or heterodimers and translocate to the nucleus to activate gene transcription. For example, cell stimulation with erythropoietin (EPO) during erythropoiesis leads to JAK2 autophosphorylation, activation, and its association with erythropoietin receptor (EPOR) that becomes phosphorylated in its cytoplasmic domain. Then, STAT5 (STAT5A or STAT5B) is recruited, phosphorylated and activated by JAK2. Once activated, dimerized STAT5 translocates into the nucleus and promotes the transcription of several essential genes involved in the modulation of erythropoiesis. Part of a signaling cascade that is activated by increased cellular retinol and that leads to the activation of STAT5 (STAT5A or STAT5B). In addition, JAK2 mediates angiotensin-2-induced ARHGEF1 phosphorylation. Plays a role in cell cycle by phosphorylating CDKN1B. Cooperates with TEC through reciprocal phosphorylation to mediate cytokine-driven activation of FOS transcription. In the nucleus, plays a key role in chromatin by specifically mediating phosphorylation of 'Tyr-41' of histone H3 (H3Y41ph), a specific tag that promotes exclusion of CBX5 (HP1 alpha) from chromatin. Up-regulates the potassium voltage-gated channel activity of KCNA3. This is Tyrosine-protein kinase JAK2 from Homo sapiens (Human).